The sequence spans 20 residues: Equinatoxin-3 (20 aa).

Residues 3–12 are plays an important role in the hemolytic activity; it reads AVAGAIIKGA. The segment at 11 to 20 is N-terminal region; that stretch reads GAALTFNVLQ.

It belongs to the actinoporin family. Sea anemone subfamily. As to quaternary structure, octamer or nonamer in membranes. Monomer in the soluble state.

Its subcellular location is the secreted. The protein resides in the nematocyst. It localises to the target cell membrane. Pore-forming protein that forms cations-selective hydrophilic pores of around 1 nm and causes cardiac stimulation and cytolysis. Pore formation is a multi-step process that involves specific recognition of membrane sphingomyelin (but neither cholesterol nor phosphatidylcholine) using aromatic rich region and adjacent phosphocholine (POC) binding site, firm binding to the membrane (mainly driven by hydrophobic interactions) accompanied by the transfer of the N-terminal region to the lipid-water interface and finally pore formation after oligomerization of monomers. Cytolytic effects include red blood cells hemolysis, platelet aggregation and lysis, cytotoxic and cytostatic effects on fibroblasts. Lethality in mammals has been ascribed to severe vasospasm of coronary vessels, cardiac arrhythmia, and inotropic effects. The protein is Equinatoxin-3 of Actinia equina (Beadlet anemone).